The following is a 170-amino-acid chain: MNKKDKKKAPQKVAKVLHPLSRKAKKLTLEGIRDIKKEKNANIRKKEQKPIKQLLDHFQEIVKKENKKIFTESEVSDIIDQFLKTKTPEEEIKQVTSRTNKLEFTKSQHNDEIKEFKNNGYSVPDLTNANYVRFLLNWDGDMKYITQQSLPLKKFKYIEQPKNEMETDSK.

This sequence belongs to the TMA16 family.

The chain is Translation machinery-associated protein 16 homolog from Dictyostelium discoideum (Social amoeba).